Reading from the N-terminus, the 144-residue chain is Angiogenin-4 (144 aa).

The N-terminal stretch at 1 to 24 (MTMSPCPLLLVFVLGLVVIPPTLA) is a signal peptide. The active-site Proton acceptor is the His36. Intrachain disulfides connect Cys49–Cys103, Cys62–Cys114, and Cys80–Cys129. The Nucleolar localization signal signature appears at 54-58 (KERKL). Residue His136 is the Proton donor of the active site.

It belongs to the pancreatic ribonuclease family. As to expression, detected in small intestine, caecum and colon, with the highest expression in Paneth cells in the intestinal epithelium.

It is found in the secreted. The protein resides in the cytoplasmic vesicle. The protein localises to the secretory vesicle lumen. Its subcellular location is the nucleus. It localises to the nucleolus. Functionally, has bactericidal activity against E.faecalis and L.monocytogenes, but not against L.innocua and E.coli. Promotes angiogenesis (in vitro). Has low ribonuclease activity (in vitro). Promotes proliferation of melanoma cells, but not of endothelial cells or fibroblasts (in vitro). In Mus musculus (Mouse), this protein is Angiogenin-4 (Ang4).